Here is a 77-residue protein sequence, read N- to C-terminus: Acyl carrier protein (77 aa).

The 76-residue stretch at Ser-2–Gln-77 folds into the Carrier domain. Position 37 is an O-(pantetheine 4'-phosphoryl)serine (Ser-37).

This sequence belongs to the acyl carrier protein (ACP) family. 4'-phosphopantetheine is transferred from CoA to a specific serine of apo-ACP by AcpS. This modification is essential for activity because fatty acids are bound in thioester linkage to the sulfhydryl of the prosthetic group.

Its subcellular location is the cytoplasm. It participates in lipid metabolism; fatty acid biosynthesis. Carrier of the growing fatty acid chain in fatty acid biosynthesis. In Colwellia psychrerythraea (strain 34H / ATCC BAA-681) (Vibrio psychroerythus), this protein is Acyl carrier protein.